The chain runs to 724 residues: Catalase-peroxidase (724 aa).

A cross-link (tryptophyl-tyrosyl-methioninium (Trp-Tyr) (with M-252)) is located at residues tryptophan 98–tyrosine 226. Histidine 99 functions as the Proton acceptor in the catalytic mechanism. Positions tyrosine 226–methionine 252 form a cross-link, tryptophyl-tyrosyl-methioninium (Tyr-Met) (with W-98). Histidine 267 contacts heme b.

It belongs to the peroxidase family. Peroxidase/catalase subfamily. As to quaternary structure, homodimer or homotetramer. Heme b serves as cofactor. In terms of processing, formation of the three residue Trp-Tyr-Met cross-link is important for the catalase, but not the peroxidase activity of the enzyme.

It carries out the reaction H2O2 + AH2 = A + 2 H2O. The catalysed reaction is 2 H2O2 = O2 + 2 H2O. In terms of biological role, bifunctional enzyme with both catalase and broad-spectrum peroxidase activity. This is Catalase-peroxidase from Vibrio cholerae serotype O1 (strain ATCC 39315 / El Tor Inaba N16961).